A 309-amino-acid chain; its full sequence is Cytochrome c1, heme protein, mitochondrial (309 aa).

The N-terminal 61 residues, 1 to 61 (MFSNLSKRWA…LYADSLTAEA (61 aa)), are a transit peptide targeting the mitochondrion. At 62 to 262 (MTAAEHGLHA…TFLNWCAEPE (201 aa)) the chain is on the mitochondrial intermembrane side. The Cytochrome c domain occupies 88 to 241 (ASIRRGYQVY…DMVEYEDGTP (154 aa)). Heme c is bound by residues cysteine 101, cysteine 104, and histidine 105. The segment covering 131–140 (EFEYDDEPDE) has biased composition (acidic residues). The segment at 131-168 (EFEYDDEPDEQGNPKKRPGKLSDYIPGPYPNEQAARAA) is disordered. Heme c is bound at residue methionine 225. Residues 263-296 (HDERKRLGLKTVIILSSLYLLSIWVKKFKWAGIK) form a helical membrane-spanning segment. Topologically, residues 297–309 (TRKFVFNPPKPRK) are mitochondrial matrix.

Belongs to the cytochrome c family. As to quaternary structure, component of the ubiquinol-cytochrome c oxidoreductase (cytochrome b-c1 complex, complex III, CIII), a multisubunit enzyme composed of 10 subunits. The complex is composed of 3 respiratory subunits cytochrome b (COB), cytochrome c1 (CYT1) and Rieske protein (RIP1), 2 core protein subunits COR1 and QCR2, and 5 low-molecular weight protein subunits QCR6, QCR7, QCR8, QCR9 and QCR10. The complex exists as an obligatory dimer and forms supercomplexes (SCs) in the inner mitochondrial membrane with a monomer or a dimer of cytochrome c oxidase (complex IV, CIV), resulting in 2 different assemblies (supercomplexes III(2)IV and III(2)IV(2)). CYT1 interacts with COX5A at the CIII-CIV interface. Heme c serves as cofactor.

It localises to the mitochondrion inner membrane. The catalysed reaction is a quinol + 2 Fe(III)-[cytochrome c](out) = a quinone + 2 Fe(II)-[cytochrome c](out) + 2 H(+)(out). Functionally, component of the ubiquinol-cytochrome c oxidoreductase, a multisubunit transmembrane complex that is part of the mitochondrial electron transport chain which drives oxidative phosphorylation. The respiratory chain contains 3 multisubunit complexes succinate dehydrogenase (complex II, CII), ubiquinol-cytochrome c oxidoreductase (cytochrome b-c1 complex, complex III, CIII) and cytochrome c oxidase (complex IV, CIV), that cooperate to transfer electrons derived from NADH and succinate to molecular oxygen, creating an electrochemical gradient over the inner membrane that drives transmembrane transport and the ATP synthase. The cytochrome b-c1 complex catalyzes electron transfer from ubiquinol to cytochrome c, linking this redox reaction to translocation of protons across the mitochondrial inner membrane, with protons being carried across the membrane as hydrogens on the quinol. In the process called Q cycle, 2 protons are consumed from the matrix, 4 protons are released into the intermembrane space and 2 electrons are passed to cytochrome c. Cytochrome c1 is a catalytic core subunit containing a c-type heme. It transfers electrons from the [2Fe-2S] iron-sulfur cluster of the Rieske protein to cytochrome c. This is Cytochrome c1, heme protein, mitochondrial (CYT1) from Saccharomyces cerevisiae (strain ATCC 204508 / S288c) (Baker's yeast).